A 294-amino-acid polypeptide reads, in one-letter code: Oligopeptide transport system permease protein OppC (294 aa).

Helical transmembrane passes span 27-47, 94-114, 127-147, 151-171, 202-224, and 260-280; these read MIST…SMFL, IAFA…VITG, FTDF…VTII, NSWS…TRLI, IWPN…NIGL, and WTWV…IFIG. The 193-residue stretch at 88–280 folds into the ABC transmembrane type-1 domain; sequence ARNSFNIAFA…IVVLAIIFIG (193 aa).

It belongs to the binding-protein-dependent transport system permease family. OppBC subfamily. The complex is composed of two ATP-binding proteins (OppD and OppF), two transmembrane proteins (OppB and OppC) and a solute-binding protein (OppA).

It localises to the cell membrane. In terms of biological role, part of the ABC transporter complex OppABCDF involved in the uptake of oligopeptides. Probably responsible for the translocation of the substrate across the membrane. This Lactococcus lactis subsp. cremoris (strain SK11) protein is Oligopeptide transport system permease protein OppC.